The following is a 514-amino-acid chain: Endoglucanase MaCel5A (514 aa).

Residues Met1–Ala23 form the signal peptide. 2 stretches are compositionally biased toward low complexity: residues Gly91–Gly114 and Ser179–Gly201. Disordered regions lie at residues Gly91–Gly118 and Ser179–Ser208. Glu346 functions as the Proton donor in the catalytic mechanism. Glu439 (nucleophile) is an active-site residue.

This sequence belongs to the glycosyl hydrolase 5 (cellulase A) family.

The catalysed reaction is Endohydrolysis of (1-&gt;4)-beta-D-glucosidic linkages in cellulose, lichenin and cereal beta-D-glucans.. Its activity is regulated as follows. Exhibits strong halostability and halotolerance. The activity increases about tenfold in the presence of 0.5 M NaCl, and about fivefold in the presence of 4.0 M NaCl. Tolerates detergents, but activity is decreased in the presence of EDTA. Activity is enhanced in the presence of Mn(2+), Ca(2+), Ba(2+) or Mg(2+), and decreased in the presence of Zn(2+), Cu(2+), Al(3+) or Fe(3+). In terms of biological role, endoglucanase that exhibits highest activity toward barley beta-glucan, lower activity toward carboxymethyl cellulose (CMC-Na), and marginal activity toward laminarin and xylan. The polypeptide is Endoglucanase MaCel5A (Microbulbifer sp. (strain ALW1)).